Reading from the N-terminus, the 605-residue chain is Sulfite reductase [NADPH] flavoprotein alpha-component (605 aa).

The Flavodoxin-like domain maps to 68-206; sequence VTVLYGSQTG…PAAEWLEGVL (139 aa). FMN-binding positions include 74 to 78, 121 to 126, and 154 to 185; these read SQTGN, STHGEG, and VLAL…KRIS. Residues 213–234 are disordered; sequence GGGSAAPAPAAASQTGESSYSR. The FAD-binding FR-type domain occupies 235–454; sequence TNPFRAEVLE…VQHNQNFKLP (220 aa). Residue 392–395 coordinates FAD; that stretch reads RLYS. Residues Asp495 and 525-533 each bind NADP(+); that span reads SRDTEEKVY.

As to quaternary structure, alpha(8)-beta(8). The alpha component is a flavoprotein, the beta component is a hemoprotein. It depends on FAD as a cofactor. FMN serves as cofactor.

It catalyses the reaction hydrogen sulfide + 3 NADP(+) + 3 H2O = sulfite + 3 NADPH + 4 H(+). The protein operates within sulfur metabolism; hydrogen sulfide biosynthesis; hydrogen sulfide from sulfite (NADPH route): step 1/1. Functionally, component of the sulfite reductase complex that catalyzes the 6-electron reduction of sulfite to sulfide. This is one of several activities required for the biosynthesis of L-cysteine from sulfate. The flavoprotein component catalyzes the electron flow from NADPH -&gt; FAD -&gt; FMN to the hemoprotein component. The chain is Sulfite reductase [NADPH] flavoprotein alpha-component (cysJ) from Bacillus subtilis (strain 168).